The chain runs to 185 residues: UPF0669 protein C6orf120 homolog (185 aa).

An N-terminal signal peptide occupies residues 1–23; that stretch reads MATPWRRALLMILASQVVTLVKC. The N-linked (GlcNAc...) asparagine glycan is linked to Asn-47.

This sequence belongs to the UPF0669 family.

It is found in the secreted. May be involved in induction of apoptosis in CD4(+) T-cells, but not CD8(+) T-cells or hepatocytes. This Mus musculus (Mouse) protein is UPF0669 protein C6orf120 homolog.